A 118-amino-acid polypeptide reads, in one-letter code: Peptidyl-tRNA hydrolase (118 aa).

This sequence belongs to the PTH2 family.

It localises to the cytoplasm. It carries out the reaction an N-acyl-L-alpha-aminoacyl-tRNA + H2O = an N-acyl-L-amino acid + a tRNA + H(+). Its function is as follows. The natural substrate for this enzyme may be peptidyl-tRNAs which drop off the ribosome during protein synthesis. The protein is Peptidyl-tRNA hydrolase of Thermococcus onnurineus (strain NA1).